A 231-amino-acid chain; its full sequence is Orotate phosphoribosyltransferase (231 aa).

Residues lysine 27, 79 to 80 (YK), arginine 106, lysine 107, lysine 110, histidine 112, and 133 to 141 (DDVMTAGTA) each bind 5-phospho-alpha-D-ribose 1-diphosphate. Orotate contacts are provided by threonine 137 and arginine 166.

It belongs to the purine/pyrimidine phosphoribosyltransferase family. PyrE subfamily. In terms of assembly, homodimer. Mg(2+) is required as a cofactor.

The catalysed reaction is orotidine 5'-phosphate + diphosphate = orotate + 5-phospho-alpha-D-ribose 1-diphosphate. Its pathway is pyrimidine metabolism; UMP biosynthesis via de novo pathway; UMP from orotate: step 1/2. In terms of biological role, catalyzes the transfer of a ribosyl phosphate group from 5-phosphoribose 1-diphosphate to orotate, leading to the formation of orotidine monophosphate (OMP). The sequence is that of Orotate phosphoribosyltransferase from Bifidobacterium longum (strain DJO10A).